The sequence spans 261 residues: Cytochrome c oxidase subunit 3 (261 aa).

The Mitochondrial matrix segment spans residues 1–15 (MTHQTHAYHMVNPSP). Residues 16 to 34 (WPLTGALSALLMTSGLIMW) traverse the membrane as a helical segment. The Mitochondrial intermembrane segment spans residues 35–40 (FHFNST). A helical transmembrane segment spans residues 41–66 (ILLMLGLTTNMLTMYQWWRDVIREST). The Mitochondrial matrix segment spans residues 67 to 72 (FQGHHT). Residues 73 to 105 (PNVQKGLRYGMILFIISEVLFFTGFFWAFYHSS) traverse the membrane as a helical segment. Residues 106–128 (LAPTPELGGCWPPTGIHPLNPLE) are Mitochondrial intermembrane-facing. The helical transmembrane segment at 129 to 152 (VPLLNTSVLLASGVSITWAHHSLM) threads the bilayer. At 153–155 (EGN) the chain is on the mitochondrial matrix side. The helical transmembrane segment at 156–183 (RNHMLQALFITIALGVYFTLLQASEYYE) threads the bilayer. The Mitochondrial intermembrane portion of the chain corresponds to 184–190 (APFTISD). The chain crosses the membrane as a helical span at residues 191–223 (GVYGSTFFVATGFHGLHVIIGSTFLIVCFFRQL). The Mitochondrial matrix segment spans residues 224-232 (KFHFTSNHH). Residues 233 to 256 (FGFEAAAWYWHFVDVVWLFLYVSI) form a helical membrane-spanning segment. Topologically, residues 257–261 (YWWGS) are mitochondrial intermembrane.

Belongs to the cytochrome c oxidase subunit 3 family. Component of the cytochrome c oxidase (complex IV, CIV), a multisubunit enzyme composed of 14 subunits. The complex is composed of a catalytic core of 3 subunits MT-CO1, MT-CO2 and MT-CO3, encoded in the mitochondrial DNA, and 11 supernumerary subunits COX4I, COX5A, COX5B, COX6A, COX6B, COX6C, COX7A, COX7B, COX7C, COX8 and NDUFA4, which are encoded in the nuclear genome. The complex exists as a monomer or a dimer and forms supercomplexes (SCs) in the inner mitochondrial membrane with NADH-ubiquinone oxidoreductase (complex I, CI) and ubiquinol-cytochrome c oxidoreductase (cytochrome b-c1 complex, complex III, CIII), resulting in different assemblies (supercomplex SCI(1)III(2)IV(1) and megacomplex MCI(2)III(2)IV(2)).

It localises to the mitochondrion inner membrane. It carries out the reaction 4 Fe(II)-[cytochrome c] + O2 + 8 H(+)(in) = 4 Fe(III)-[cytochrome c] + 2 H2O + 4 H(+)(out). Its function is as follows. Component of the cytochrome c oxidase, the last enzyme in the mitochondrial electron transport chain which drives oxidative phosphorylation. The respiratory chain contains 3 multisubunit complexes succinate dehydrogenase (complex II, CII), ubiquinol-cytochrome c oxidoreductase (cytochrome b-c1 complex, complex III, CIII) and cytochrome c oxidase (complex IV, CIV), that cooperate to transfer electrons derived from NADH and succinate to molecular oxygen, creating an electrochemical gradient over the inner membrane that drives transmembrane transport and the ATP synthase. Cytochrome c oxidase is the component of the respiratory chain that catalyzes the reduction of oxygen to water. Electrons originating from reduced cytochrome c in the intermembrane space (IMS) are transferred via the dinuclear copper A center (CU(A)) of subunit 2 and heme A of subunit 1 to the active site in subunit 1, a binuclear center (BNC) formed by heme A3 and copper B (CU(B)). The BNC reduces molecular oxygen to 2 water molecules using 4 electrons from cytochrome c in the IMS and 4 protons from the mitochondrial matrix. This Eudorcas thomsonii (Thomson's gazelle) protein is Cytochrome c oxidase subunit 3 (MT-CO3).